Consider the following 301-residue polypeptide: Phospholipase A1 (301 aa).

Cysteines 4 and 87 form a disulfide. The active-site Nucleophile is serine 137. The active-site Charge relay system is aspartate 165. 2 cysteine pairs are disulfide-bonded: cysteine 176–cysteine 181 and cysteine 219–cysteine 228. Histidine 230 (charge relay system) is an active-site residue. Intrachain disulfides connect cysteine 245/cysteine 269, cysteine 246/cysteine 294, and cysteine 262/cysteine 267.

It belongs to the AB hydrolase superfamily. Lipase family. Expressed by the venom gland.

Its subcellular location is the secreted. The catalysed reaction is a 1,2-diacyl-sn-glycero-3-phosphocholine + H2O = a 2-acyl-sn-glycero-3-phosphocholine + a fatty acid + H(+). Its function is as follows. Catalyzes the hydrolysis of phosphatidylcholine with phospholipase A1 activity. May act as an allergen and induce hemolytic activity. This chain is Phospholipase A1, found in Vespa crabro (European hornet).